Consider the following 179-residue polypeptide: Large ribosomal subunit protein uL5 (179 aa).

The protein belongs to the universal ribosomal protein uL5 family. Part of the 50S ribosomal subunit; part of the 5S rRNA/L5/L18/L25 subcomplex. Contacts the 5S rRNA and the P site tRNA. Forms a bridge to the 30S subunit in the 70S ribosome.

In terms of biological role, this is one of the proteins that bind and probably mediate the attachment of the 5S RNA into the large ribosomal subunit, where it forms part of the central protuberance. In the 70S ribosome it contacts protein S13 of the 30S subunit (bridge B1b), connecting the 2 subunits; this bridge is implicated in subunit movement. Contacts the P site tRNA; the 5S rRNA and some of its associated proteins might help stabilize positioning of ribosome-bound tRNAs. This chain is Large ribosomal subunit protein uL5, found in Rhodospirillum rubrum (strain ATCC 11170 / ATH 1.1.1 / DSM 467 / LMG 4362 / NCIMB 8255 / S1).